We begin with the raw amino-acid sequence, 281 residues long: uncharacterized protein (281 aa).

This is an uncharacterized protein from Methanocaldococcus jannaschii (strain ATCC 43067 / DSM 2661 / JAL-1 / JCM 10045 / NBRC 100440) (Methanococcus jannaschii).